We begin with the raw amino-acid sequence, 648 residues long: UDP-galactose:fucoside alpha-3-galactosyltransferase (648 aa).

WD repeat units lie at residues 320 to 358 (NHTDIITSINSSDDGKLFTTSIDKSIKIWKFENTSGNDT), 372 to 420 (HKRG…IQTF), 422 to 461 (GHTGIINQLIVIPNSSYFFTCSDDNTIRQFDLNNINFKRV), 464 to 505 (GHNG…NIIK), 507 to 546 (NQGGWIRKIIYNDNLNQLISGGNDGTIKIWSCDNLNNFND), 556 to 595 (NENSSINDLQFDSDTNLIYCAFENGSLKSFKLTSNNNNNN), and 617 to 648 (HLNSSINCIHISKSLNLLFSGGFDKQIKSWDL).

It belongs to the glycosyltransferase 77 family. Mn(2+) serves as cofactor.

The protein resides in the cytoplasm. The catalysed reaction is an alpha-L-fucosyl-(1-&gt;2)-beta-D-galactosyl derivative + UDP-alpha-D-galactose = an alpha-D-galactosyl-(1-&gt;3)-[alpha-L-fucosyl-(1-&gt;2)]-beta-D-galactosyl derivative + UDP + H(+). It functions in the pathway protein modification; protein glycosylation. Its activity is regulated as follows. Stimulated by dithiothreitol (DTT) in vitro. Totally inhibited by EDTA. In terms of biological role, specifically catalyzes the transfer of a galactosyl residue to the hydroxyproline-linked saccharide on Skp1 protein (fpaA/fpaB). Catalyzes the formation of a Gal-alpha-1,3-Fuc linkage, leading to Gal-Fuc-Gal-GlcNAc-HyPro143-Skp1. This Dictyostelium discoideum (Social amoeba) protein is UDP-galactose:fucoside alpha-3-galactosyltransferase (agtA).